The sequence spans 586 residues: CTP synthase 2 (586 aa).

Residues 300–554 (SIALVGKYTK…LAATGTLNTH (255 aa)) form the Glutamine amidotransferase type-1 domain. Residues Cys-399, His-526, and Glu-528 each act as for GATase activity in the active site. Phosphoserine occurs at positions 568, 571, and 574.

This sequence belongs to the CTP synthase family.

It carries out the reaction UTP + L-glutamine + ATP + H2O = CTP + L-glutamate + ADP + phosphate + 2 H(+). Its pathway is pyrimidine metabolism; CTP biosynthesis via de novo pathway; CTP from UDP: step 2/2. Functionally, catalyzes the ATP-dependent amination of UTP to CTP with either L-glutamine or ammonia as the source of nitrogen. Constitutes the rate-limiting enzyme in the synthesis of cytosine nucleotides. In Rattus norvegicus (Rat), this protein is CTP synthase 2 (Ctps2).